Here is a 79-residue protein sequence, read N- to C-terminus: Hematopoietic cell signal transducer (79 aa).

Positions 1 to 18 (MAPPGHLLFLFLLPVAAS) are cleaved as a signal peptide. Over 19–35 (QTNEGSCSGCGPLSLPL) the chain is Extracellular. The chain crosses the membrane as a helical span at residues 36-56 (LAGLVAADAVMSLLIVGVVFV). Topologically, residues 57-79 (CMRLHSRPAQEDGRVYINMPGRG) are cytoplasmic. Phosphotyrosine is present on Y72. Residues 72–74 (YIN) form a GRB2 binding site region. Positions 72–75 (YINM) are PIK3R1 binding site.

It belongs to the DAP10 family. As to quaternary structure, homodimer; Disulfide-linked. Heterohexamer composed of four subunits of HCST/DAP10 and two subunits of KLRK1. Interacts (via transmembrane domain) with KLRK1 (via transmembrane domain); the interaction is required for KLRK1 NK cell surface and induces NK cell-mediated cytotoxicity. Interacts with PIK3R1 and GRB2. Interacts with CLEC5A. Forms an CLEC5A/TYROBP/HCST trimolecular complex depending almost solely on TYROBP. Interacts with CD300H. Post-translationally, phosphorylated; PIK3R1 and GRB2 associate specifically with tyrosine-phosphorylated HCST. O-glycosylated.

The protein localises to the membrane. Functionally, transmembrane adapter protein which associates with KLRK1 to form an activation receptor KLRK1-HCST in lymphoid and myeloid cells; this receptor plays a major role in triggering cytotoxicity against target cells expressing cell surface ligands such as MHC class I chain-related MICA and MICB, and UL16-binding proteins (ULBPs); these ligands are up-regulated by stress conditions and pathological state such as viral infection and tumor transformation. Functions as a docking site for PI3-kinase PIK3R1 and GRB2. Interaction of ULBPs with KLRK1-HCST triggers calcium mobilization and activation of the PIK3R1, MAP2K/ERK, and JAK2/STAT5 signaling pathways. Both PIK3R1 and GRB2 are required for full KLRK1-HCST-mediated activation and ultimate killing of target cells. In NK cells, KLRK1-HCST signaling directly induces cytotoxicity and enhances cytokine production initiated via DAP12/TYROBP-associated receptors. In T-cells, it provides primarily costimulation for TCR-induced signals. KLRK1-HCST receptor plays a role in immune surveillance against tumors and is required for cytolysis of tumors cells; indeed, melanoma cells that do not express KLRK1 ligands escape from immune surveillance mediated by NK cells. This chain is Hematopoietic cell signal transducer (Hcst), found in Rattus norvegicus (Rat).